A 91-amino-acid polypeptide reads, in one-letter code: Putative regulatory protein Moth_0891 (91 aa).

This sequence belongs to the RemA family.

This chain is Putative regulatory protein Moth_0891, found in Moorella thermoacetica (strain ATCC 39073 / JCM 9320).